The primary structure comprises 375 residues: MAGRTILLSAGGTGGHLFPAEALAHELRARGWSVHLATDKRATRFAGTFPADEIHAIDSATFGSRNPLALLKSGLSIWRGFKQSTALINRLKPAAVVGFGGYPTLPPLYAATRRQVPTLVHEQNAVMGRANKALAPRVTAIAGGFLPESDGPFASKTVLTGNPVRPAVIQASGTPYAPSSGRGVFRLLVFGGSQGAQYFSQVVPEAVRLLPATLRSRLRIVQQARPEDEGPVRSAYDELGVKAEVSPFFTDLASRIADAHLVISRSGASTVSEIAVIGRPAILVPYPYALDHDQAANATALERAGGAEIVPQEKLSAERLRGLLEVAMGAPDKLAAMAAAAKSVGRPDASRLLADVTEAIASGETVTEFKRRRSA.

UDP-N-acetyl-alpha-D-glucosamine is bound by residues 13–15 (TGG), asparagine 124, arginine 165, serine 193, and glutamine 294.

Belongs to the glycosyltransferase 28 family. MurG subfamily.

It localises to the cell inner membrane. It carries out the reaction di-trans,octa-cis-undecaprenyl diphospho-N-acetyl-alpha-D-muramoyl-L-alanyl-D-glutamyl-meso-2,6-diaminopimeloyl-D-alanyl-D-alanine + UDP-N-acetyl-alpha-D-glucosamine = di-trans,octa-cis-undecaprenyl diphospho-[N-acetyl-alpha-D-glucosaminyl-(1-&gt;4)]-N-acetyl-alpha-D-muramoyl-L-alanyl-D-glutamyl-meso-2,6-diaminopimeloyl-D-alanyl-D-alanine + UDP + H(+). It functions in the pathway cell wall biogenesis; peptidoglycan biosynthesis. In terms of biological role, cell wall formation. Catalyzes the transfer of a GlcNAc subunit on undecaprenyl-pyrophosphoryl-MurNAc-pentapeptide (lipid intermediate I) to form undecaprenyl-pyrophosphoryl-MurNAc-(pentapeptide)GlcNAc (lipid intermediate II). In Chelativorans sp. (strain BNC1), this protein is UDP-N-acetylglucosamine--N-acetylmuramyl-(pentapeptide) pyrophosphoryl-undecaprenol N-acetylglucosamine transferase.